The sequence spans 601 residues: Trehalose synthase/amylase TreS (601 aa).

The interval 1 to 21 (MNEAEHSVEHPPVQGSHVEGG) is disordered. D98 serves as a coordination point for substrate. Residue N140 participates in Ca(2+) binding. 2 residues coordinate substrate: H141 and Q206. D208 provides a ligand contact to Ca(2+). Residue R236 participates in substrate binding. D238 acts as the Nucleophile in catalysis. Positions 242, 243, and 245 each coordinate Ca(2+). The Proton donor role is filled by E280. Substrate is bound by residues H349 and D350.

The protein belongs to the glycosyl hydrolase 13 family. TreS subfamily. As to quaternary structure, homohexamer.

It catalyses the reaction D-maltose = alpha,alpha-trehalose. The enzyme catalyses Endohydrolysis of (1-&gt;4)-alpha-D-glucosidic linkages in polysaccharides containing three or more (1-&gt;4)-alpha-linked D-glucose units.. It participates in glycan biosynthesis; glycogen biosynthesis. It functions in the pathway capsule biogenesis; capsule polysaccharide biosynthesis. Its function is as follows. Catalyzes the reversible interconversion of maltose and trehalose by transglucosylation. Also displays amylase activity, catalyzing the endohydrolysis of (1-&gt;4)-alpha-D-glucosidic linkages in glycogen and maltooligosaccharides such as maltoheptaose, to produce maltose which then can be converted to trehalose. TreS plays a key role in the utilization of trehalose for the production of glycogen and alpha-glucan via the TreS-Pep2 branch involved in the biosynthesis of maltose-1-phosphate (M1P). Might also function as a sensor and/or regulator of trehalose levels within the cell. Thus, when trehalose levels in the cell become dangerously low, TreS could expedite the conversion of glycogen to maltose via its amylase activity and then convert the maltose to trehalose; but this enzyme also could expedite or promote the conversion of trehalose to glycogen when cytoplasmic trehalose levels become too high. This Mycobacterium tuberculosis (strain CDC 1551 / Oshkosh) protein is Trehalose synthase/amylase TreS.